A 292-amino-acid chain; its full sequence is Bifunctional protein FolD (292 aa).

NADP(+) is bound by residues 171–173 (GAS), Ile196, and Ile237.

Belongs to the tetrahydrofolate dehydrogenase/cyclohydrolase family. As to quaternary structure, homodimer.

The enzyme catalyses (6R)-5,10-methylene-5,6,7,8-tetrahydrofolate + NADP(+) = (6R)-5,10-methenyltetrahydrofolate + NADPH. The catalysed reaction is (6R)-5,10-methenyltetrahydrofolate + H2O = (6R)-10-formyltetrahydrofolate + H(+). The protein operates within one-carbon metabolism; tetrahydrofolate interconversion. Functionally, catalyzes the oxidation of 5,10-methylenetetrahydrofolate to 5,10-methenyltetrahydrofolate and then the hydrolysis of 5,10-methenyltetrahydrofolate to 10-formyltetrahydrofolate. The sequence is that of Bifunctional protein FolD from Helicobacter acinonychis (strain Sheeba).